Consider the following 142-residue polypeptide: Large ribosomal subunit protein uL11 (142 aa).

This sequence belongs to the universal ribosomal protein uL11 family. As to quaternary structure, part of the ribosomal stalk of the 50S ribosomal subunit. Interacts with L10 and the large rRNA to form the base of the stalk. L10 forms an elongated spine to which L12 dimers bind in a sequential fashion forming a multimeric L10(L12)X complex. Post-translationally, one or more lysine residues are methylated.

Functionally, forms part of the ribosomal stalk which helps the ribosome interact with GTP-bound translation factors. In Haemophilus influenzae (strain PittGG), this protein is Large ribosomal subunit protein uL11.